The chain runs to 337 residues: Tetraacyldisaccharide 4'-kinase (337 aa).

72 to 79 serves as a coordination point for ATP; the sequence is TVGGSGKT.

The protein belongs to the LpxK family.

The catalysed reaction is a lipid A disaccharide + ATP = a lipid IVA + ADP + H(+). Its pathway is glycolipid biosynthesis; lipid IV(A) biosynthesis; lipid IV(A) from (3R)-3-hydroxytetradecanoyl-[acyl-carrier-protein] and UDP-N-acetyl-alpha-D-glucosamine: step 6/6. Transfers the gamma-phosphate of ATP to the 4'-position of a tetraacyldisaccharide 1-phosphate intermediate (termed DS-1-P) to form tetraacyldisaccharide 1,4'-bis-phosphate (lipid IVA). The chain is Tetraacyldisaccharide 4'-kinase from Shewanella sediminis (strain HAW-EB3).